The following is a 306-amino-acid chain: Glutaminase (306 aa).

Positions 64, 115, 159, 166, 190, 242, and 260 each coordinate substrate.

The protein belongs to the glutaminase family. As to quaternary structure, homotetramer.

The enzyme catalyses L-glutamine + H2O = L-glutamate + NH4(+). The protein is Glutaminase of Aliivibrio salmonicida (strain LFI1238) (Vibrio salmonicida (strain LFI1238)).